Reading from the N-terminus, the 312-residue chain is UDP-N-acetylenolpyruvoylglucosamine reductase (312 aa).

The 167-residue stretch at 33–199 (RVGGKAEWYC…TGATLQLLPG (167 aa)) folds into the FAD-binding PCMH-type domain. The active site involves Arg-178. Residue Ser-229 is the Proton donor of the active site. Glu-299 is an active-site residue.

It belongs to the MurB family. It depends on FAD as a cofactor.

The protein localises to the cytoplasm. It carries out the reaction UDP-N-acetyl-alpha-D-muramate + NADP(+) = UDP-N-acetyl-3-O-(1-carboxyvinyl)-alpha-D-glucosamine + NADPH + H(+). It participates in cell wall biogenesis; peptidoglycan biosynthesis. Functionally, cell wall formation. In Synechococcus sp. (strain JA-3-3Ab) (Cyanobacteria bacterium Yellowstone A-Prime), this protein is UDP-N-acetylenolpyruvoylglucosamine reductase.